A 513-amino-acid chain; its full sequence is Maturase K (513 aa).

The protein belongs to the intron maturase 2 family. MatK subfamily.

The protein localises to the plastid. The protein resides in the chloroplast. Usually encoded in the trnK tRNA gene intron. Probably assists in splicing its own and other chloroplast group II introns. The polypeptide is Maturase K (Typha latifolia (Bulrush)).